The chain runs to 339 residues: Biotin synthase (339 aa).

One can recognise a Radical SAM core domain in the interval 55–282; that stretch reads NAVQLSTLLS…KAVVRLSAGR (228 aa). [4Fe-4S] cluster-binding residues include Cys70, Cys74, and Cys77. [2Fe-2S] cluster is bound by residues Cys114, Cys145, Cys205, and Arg277.

It belongs to the radical SAM superfamily. Biotin synthase family. As to quaternary structure, homodimer. [4Fe-4S] cluster serves as cofactor. Requires [2Fe-2S] cluster as cofactor.

The enzyme catalyses (4R,5S)-dethiobiotin + (sulfur carrier)-SH + 2 reduced [2Fe-2S]-[ferredoxin] + 2 S-adenosyl-L-methionine = (sulfur carrier)-H + biotin + 2 5'-deoxyadenosine + 2 L-methionine + 2 oxidized [2Fe-2S]-[ferredoxin]. It participates in cofactor biosynthesis; biotin biosynthesis; biotin from 7,8-diaminononanoate: step 2/2. Its function is as follows. Catalyzes the conversion of dethiobiotin (DTB) to biotin by the insertion of a sulfur atom into dethiobiotin via a radical-based mechanism. This is Biotin synthase from Burkholderia vietnamiensis (strain G4 / LMG 22486) (Burkholderia cepacia (strain R1808)).